The chain runs to 166 residues: Endoribonuclease YbeY (166 aa).

Zn(2+) is bound by residues H132, H136, and H142.

Belongs to the endoribonuclease YbeY family. Requires Zn(2+) as cofactor.

The protein resides in the cytoplasm. In terms of biological role, single strand-specific metallo-endoribonuclease involved in late-stage 70S ribosome quality control and in maturation of the 3' terminus of the 16S rRNA. The protein is Endoribonuclease YbeY of Clostridium botulinum (strain ATCC 19397 / Type A).